Reading from the N-terminus, the 57-residue chain is MATPIRPLSYSLRRQSNGESRRLSTRVTSVTVCSVRYSVLSFLNTTTVRWKRFVPVV.

The polypeptide is Protein 19.3 (Escherichia coli (Bacteriophage T7)).